A 525-amino-acid polypeptide reads, in one-letter code: Cysteine--tRNA ligase (525 aa).

Cys-49 lines the Zn(2+) pocket. The 'HIGH' region motif lies at 51-61; that stretch reads VTVYDLCHLGH. Zn(2+)-binding residues include Cys-258, His-283, and Glu-287. A 'KMSKS' region motif is present at residues 315–319; the sequence is KMSKS. Lys-318 serves as a coordination point for ATP.

This sequence belongs to the class-I aminoacyl-tRNA synthetase family. Monomer. Requires Zn(2+) as cofactor.

It localises to the cytoplasm. It carries out the reaction tRNA(Cys) + L-cysteine + ATP = L-cysteinyl-tRNA(Cys) + AMP + diphosphate. The protein is Cysteine--tRNA ligase of Synechococcus sp. (strain JA-2-3B'a(2-13)) (Cyanobacteria bacterium Yellowstone B-Prime).